Consider the following 281-residue polypeptide: 1-acyl-sn-glycerol-3-phosphate acyltransferase (281 aa).

A run of 3 helical transmembrane segments spans residues 40 to 60, 71 to 91, and 110 to 130; these read IFVC…IMVL, LGNL…GIPI, and ASPI…VGVA. Residues 109-114 carry the HXXXXD motif motif; that stretch reads HASPID.

It belongs to the 1-acyl-sn-glycerol-3-phosphate acyltransferase family.

It localises to the membrane. It carries out the reaction a 1-acyl-sn-glycero-3-phosphate + an acyl-CoA = a 1,2-diacyl-sn-glycero-3-phosphate + CoA. It participates in phospholipid metabolism; CDP-diacylglycerol biosynthesis; CDP-diacylglycerol from sn-glycerol 3-phosphate: step 2/3. Functionally, converts lysophosphatidic acid (LPA) into phosphatidic acid by incorporating acyl moiety at the 2 position. This enzyme uses erucoyl-CoA as an acyl donor. The protein is 1-acyl-sn-glycerol-3-phosphate acyltransferase (PLSC) of Limnanthes douglasii (Douglas' meadowfoam).